The following is a 339-amino-acid chain: Ketol-acid reductoisomerase (NADP(+)) (339 aa).

Positions 1-182 (MRVYYDRDAD…GGGRAGIIET (182 aa)) constitute a KARI N-terminal Rossmann domain. Residues 24–27 (YGSQ), R48, S51, T53, and 83–86 (DELQ) contribute to the NADP(+) site. H108 is an active-site residue. Position 134 (G134) interacts with NADP(+). In terms of domain architecture, KARI C-terminal knotted spans 183-328 (SFKEECETDL…AKLRDMMPWI (146 aa)). Residues D191, E195, E227, and E231 each coordinate Mg(2+). Residue S252 participates in substrate binding.

The protein belongs to the ketol-acid reductoisomerase family. The cofactor is Mg(2+).

The enzyme catalyses (2R)-2,3-dihydroxy-3-methylbutanoate + NADP(+) = (2S)-2-acetolactate + NADPH + H(+). The catalysed reaction is (2R,3R)-2,3-dihydroxy-3-methylpentanoate + NADP(+) = (S)-2-ethyl-2-hydroxy-3-oxobutanoate + NADPH + H(+). Its pathway is amino-acid biosynthesis; L-isoleucine biosynthesis; L-isoleucine from 2-oxobutanoate: step 2/4. It participates in amino-acid biosynthesis; L-valine biosynthesis; L-valine from pyruvate: step 2/4. In terms of biological role, involved in the biosynthesis of branched-chain amino acids (BCAA). Catalyzes an alkyl-migration followed by a ketol-acid reduction of (S)-2-acetolactate (S2AL) to yield (R)-2,3-dihydroxy-isovalerate. In the isomerase reaction, S2AL is rearranged via a Mg-dependent methyl migration to produce 3-hydroxy-3-methyl-2-ketobutyrate (HMKB). In the reductase reaction, this 2-ketoacid undergoes a metal-dependent reduction by NADPH to yield (R)-2,3-dihydroxy-isovalerate. This Rhodopseudomonas palustris (strain HaA2) protein is Ketol-acid reductoisomerase (NADP(+)).